The primary structure comprises 514 residues: Voltage-gated potassium channel regulatory subunit KCNG1 (514 aa).

At 1–224 (MTLLPGDNSH…DMVERPHSGL (224 aa)) the chain is on the cytoplasmic side. The span at 180–196 (MEREEEEEPLDSEDQES) shows a compositional bias: acidic residues. The segment at 180–205 (MEREEEEEPLDSEDQESEGPSASEGR) is disordered. A helical membrane pass occupies residues 225–246 (PGKVFACLSVLFVTVTAVNLSV). At 247–267 (STLPSLREEEEQGQCSQMCHN) the chain is on the extracellular side. A helical transmembrane segment spans residues 268–289 (VFIVESVCVGWFSLEFLLRFIQ). The Cytoplasmic portion of the chain corresponds to 290-300 (APSKFAFLRSP). A helical transmembrane segment spans residues 301-321 (LTLIDLVAILPYYVTLLVDGA). Residues 322 to 338 (ASSRRKPSTGNSYLDKV) lie on the Extracellular side of the membrane. A helical; Voltage-sensor membrane pass occupies residues 339–359 (GLVLRVLRALRILYVMRLARH). Residues 360-374 (SLGLQTLGLTARRCT) lie on the Cytoplasmic side of the membrane. A helical membrane pass occupies residues 375–396 (REFGLLLLFLCVAIALFAPLLY). Topologically, residues 397-411 (VIENEMADSPEFTSI) are extracellular. An intramembrane region (helical) is located at residues 412 to 423 (PACYWWAVITMT). A Selectivity filter motif is present at residues 424 to 429 (TVGYGD). The stretch at 424–431 (TVGYGDMV) is an intramembrane region. Residues 432 to 438 (PRSTPGQ) lie on the Extracellular side of the membrane. A helical membrane pass occupies residues 439–467 (VVALSSILSGILLMAFPVTSIFHTFSRSY). Over 468–514 (LELKQEQERVLIRRAQYLIKTKSQLSGMSQDSDILFGSASSDTRDNN) the chain is Cytoplasmic.

The protein belongs to the potassium channel family. G (TC 1.A.1.2) subfamily. Kv6.1/KCNG1 sub-subfamily. As to quaternary structure, heterotetramer with KCNB1 or KCNB2.

It localises to the cell membrane. Its function is as follows. Regulatory alpha-subunit of the voltage-gated potassium (Kv) channel which, when coassembled with KCNB1 or KCNB2, can modulate their expression and their gating kinetics by acting on deactivation upon repolarization and inactivation during maintained depolarization. Potassium channel subunit that does not form functional channels by itself. In Mus musculus (Mouse), this protein is Voltage-gated potassium channel regulatory subunit KCNG1.